The following is an 842-amino-acid chain: Protein translocase subunit SecA 1 (842 aa).

ATP contacts are provided by residues glutamine 85, 103–107 (GEGKT), and aspartate 493. The Zn(2+) site is built by cysteine 824, cysteine 826, cysteine 835, and histidine 836.

Belongs to the SecA family. In terms of assembly, monomer and homodimer. Part of the essential Sec protein translocation apparatus which comprises SecA, SecYEG and auxiliary proteins SecDF. Other proteins may also be involved. Requires Zn(2+) as cofactor.

Its subcellular location is the cell membrane. The protein localises to the cytoplasm. It catalyses the reaction ATP + H2O + cellular proteinSide 1 = ADP + phosphate + cellular proteinSide 2.. Part of the Sec protein translocase complex. Interacts with the SecYEG preprotein conducting channel. Has a central role in coupling the hydrolysis of ATP to the transfer of proteins into and across the cell membrane, serving as an ATP-driven molecular motor driving the stepwise translocation of polypeptide chains across the membrane. The chain is Protein translocase subunit SecA 1 from Streptococcus agalactiae serotype Ia (strain ATCC 27591 / A909 / CDC SS700).